We begin with the raw amino-acid sequence, 573 residues long: L-lactate dehydrogenase (cytochrome) (573 aa).

The N-terminal 73 residues, 1-73 (MFKSQLRTAT…LYQKDKFISA (73 aa)), are a transit peptide targeting the mitochondrion. Residues 80–157 (DIELTPEIVS…PPEKHLGPLV (78 aa)) enclose the Cytochrome b5 heme-binding domain. 3 residues coordinate heme b: His-115, His-138, and Tyr-208. In terms of domain architecture, FMN hydroxy acid dehydrogenase spans 182–542 (PPLSQMINLH…TPELLDTRSI (361 aa)). Pyruvate is bound at residue Tyr-208. Residues 260–263 (SATA), Ser-290, and Gln-313 contribute to the FMN site. Tyr-315 lines the pyruvate pocket. Thr-341 contributes to the FMN binding site. A heme b-binding site is contributed by Lys-357. Position 408 (Lys-408) interacts with FMN. Residues His-432 and Arg-435 each contribute to the pyruvate site. FMN-binding positions include 468–472 (DGGVR) and 491–492 (GR).

In the N-terminal section; belongs to the cytochrome b5 family. This sequence in the C-terminal section; belongs to the FMN-dependent alpha-hydroxy acid dehydrogenase family. Homotetramer. It depends on FMN as a cofactor. Heme b is required as a cofactor.

It is found in the mitochondrion intermembrane space. It carries out the reaction (S)-lactate + 2 Fe(III)-[cytochrome c] = 2 Fe(II)-[cytochrome c] + pyruvate + 2 H(+). Its function is as follows. Catalyzes the oxidation of (S)-lactate (L-lactate) to pyruvate with subsequent transfer of electrons to cytochrome c. Is involved in the utilization of (S)-lactate as a sole source of carbon for growth. The sequence is that of L-lactate dehydrogenase (cytochrome) (CYB2) from Wickerhamomyces anomalus (Yeast).